A 747-amino-acid chain; its full sequence is MGHVTSPSKRYPASFKRAGSILGVSIALAAFSNVAAAGCEYVVTNSWGSGFTAAIRITNSTSSVINGWNVSWQYNSNRVTNLWNANLSGSNPYSASNLSWNGTIQPGQTVEFGFQGVTNSGTVESPTVNGAACTGGTSSSVSSSSVVSSSSSSRSSVSSSSVVSSSSSVVSSSSSSVVSGGQCNWYGTLYPLCVSTTSGWGYENNRSCISPSTCSAQPAPYGIVGGSSSPSSISSSSVRSSSSSSVVPPSSSSSSSVPSSSSSSVSSSSVVSSSSSSVSVPGTGVFRVNTQGNLTKDGQLLPARCGNWFGLEGRHEPSNDADNPSGAPMELYAGNMWWVNNSQGSGRTIQQTMTELKQQGITMLRLPIAPQTLDANDPQGRSPNLKNHQSIRQSNARQALEDFIKLADQNDIQIFIDIHSCSNYVGWRAGRLDARPPYVDANRVGYDFTREEYSCSATNNPSSVTRIHAYDKQKWLANLREIAGLSAKLGVSNLIGIDVFNEPYDYTWAEWKGMVEEAYQAINEVNPNMLIIVEGISANANTQDGTPDTSVPVPHGSTDLNPNWGENLYEAGANPPNIPKDRLLFSPHTYGPSVFVQRQFMDPAQTECAGLEGDEAAQARCRIVINPTVLEQGWEEHFGYLRELGYGILIGEFGGNMDWPGAKSSQADRNAWSHITTNVDQQWQQAAASYFKRKGINACYWSMNPESADTMGWYLTPWDPVTANDMWGQWTGFDPRKTQLLHNMWGL.

A signal peptide spans 1–37 (MGHVTSPSKRYPASFKRAGSILGVSIALAAFSNVAAA). Residues 38 to 136 (GCEYVVTNSW…TVNGAACTGG (99 aa)) form the CBM2 domain. 3 cysteine pairs are disulfide-bonded: cysteine 39–cysteine 133, cysteine 183–cysteine 214, and cysteine 193–cysteine 208. One can recognise a CBM10 domain in the interval 182-211 (QCNWYGTLYPLCVSTTSGWGYENNRSCISP). A disordered region spans residues 226 to 283 (GSSSPSSISSSSVRSSSSSSVVPPSSSSSSSVPSSSSSSVSSSSVVSSSSSSVSVPGT). Positions 227 to 281 (SSSPSSISSSSVRSSSSSSVVPPSSSSSSSVPSSSSSSVSSSSVVSSSSSSVSVP) are enriched in low complexity. Residues 280-747 (VPGTGVFRVN…TQLLHNMWGL (468 aa)) form a catalytic region. Glutamate 502 functions as the Proton donor in the catalytic mechanism. The active-site Nucleophile is the glutamate 652.

It belongs to the glycosyl hydrolase 5 (cellulase A) family.

The catalysed reaction is Endohydrolysis of (1-&gt;4)-beta-D-glucosidic linkages in cellulose, lichenin and cereal beta-D-glucans.. The sequence is that of Endoglucanase C (celC) from Cellvibrio japonicus (strain Ueda107) (Pseudomonas fluorescens subsp. cellulosa).